The primary structure comprises 622 residues: Polyamine transporter 3 (622 aa).

The segment covering 1-47 (MNRQESINSFNSDETSSLSDVESQQPQQYIPSESGSKSNMAPNQLKL) has biased composition (polar residues). Residues 1 to 76 (MNRQESINSF…VPDVNAPQSS (76 aa)) are disordered. The Cytoplasmic segment spans residues 1–182 (MNRQESINSF…WPAWIRWSYT (182 aa)). Position 55 is a phosphoserine (Ser55). Thr98 carries the post-translational modification Phosphothreonine. Phosphoserine is present on residues Ser101 and Ser132. The interval 105 to 152 (TSTAISRTRTRQIDGASSPSSNEDALESDNNEKGKEGDSSGANDEAPD) is disordered. A helical transmembrane segment spans residues 183-203 (VLLSILVICVAYGSACISGGL). The Extracellular segment spans residues 204–215 (GTVEKKYHVGME). The chain crosses the membrane as a helical span at residues 216–236 (AAILSVSLMVIGFSLGPLIWS). The Cytoplasmic segment spans residues 237–245 (PVSDLYGRR). Residues 246 to 266 (VAYFVSMGLYVIFNIPCALAP) traverse the membrane as a helical segment. Over 267 to 275 (NLGSLLACR) the chain is Extracellular. A helical membrane pass occupies residues 276–296 (FLCGVWSSSGLCLVGGSIADM). The Cytoplasmic segment spans residues 297 to 305 (FPSETRGKA). The helical transmembrane segment at 306–326 (IAFFAFAPYVGPVVGPLVNGF) threads the bilayer. The Extracellular segment spans residues 327–335 (ISVSTGRMD). A helical transmembrane segment spans residues 336–356 (LIFWVNMAFAGVMWIISSAIP). The Cytoplasmic portion of the chain corresponds to 357 to 416 (ETYAPVILKRKAARLRKETGNPKIMTEQEAQGVSMGEMMRACLLRPLYFSVTEPVLVATC). A helical membrane pass occupies residues 417–437 (FYVCLIYSLLYAFFFAFPVIF). The Extracellular segment spans residues 438 to 446 (GELYGYKDN). A helical transmembrane segment spans residues 447–467 (LVGLMFIPIVIGALWALATTF). Residues 468-487 (YCENKYLQIVKQRKPTPEDR) lie on the Cytoplasmic side of the membrane. A helical transmembrane segment spans residues 488–508 (LLGAKIGAPFAAIALWILGAT). Topologically, residues 509–512 (AYKH) are extracellular. The chain crosses the membrane as a helical span at residues 513 to 533 (IIWVGPASAGLAFGFGMVLIY). The Cytoplasmic segment spans residues 534–550 (YSLNNYIIDCYVQYASS). Residues 551-571 (ALATKVFLRSAGGAAFPLFTI) form a helical membrane-spanning segment. The Extracellular segment spans residues 572 to 583 (QMYHKLNLHWGS). The helical transmembrane segment at 584–604 (WLLAFISTAMIALPFAFSYWG) threads the bilayer. Topologically, residues 605-622 (KGLRHKLSKKDYSIDSIE) are cytoplasmic.

This sequence belongs to the major facilitator superfamily. DHA1 family. Polyamines/proton antiporter (TC 2.A.1.2.16) subfamily.

The protein resides in the cell membrane. Functionally, cell membrane polyamine/proton antiporter, involved in the detoxification of excess polyamines in the cytoplasm. Recognizes spermine, but not spermidine. This chain is Polyamine transporter 3 (TPO3), found in Saccharomyces cerevisiae (strain ATCC 204508 / S288c) (Baker's yeast).